The following is a 325-amino-acid chain: NADH-quinone oxidoreductase subunit H (325 aa).

Helical transmembrane passes span 11–31 (ILLTVLKAVVILLVVVTCGAF), 81–101 (VIFTLAPMIAFTSLLLAFAIV), 114–134 (IGILFFLMMAGLAVYAVLFAG), 154–174 (LSYEVFLGLSLMGVVAQAGSF), 186–206 (VWNVIPQFFGFITFAIAGVAV), 237–257 (FFVGEYIGIVTISALMVTLFF), 265–285 (LPPFIWFALKTAFFMMMFILI), and 304–324 (ICLPLTLINLLVTAAVILWQA).

Belongs to the complex I subunit 1 family. In terms of assembly, NDH-1 is composed of 13 different subunits. Subunits NuoA, H, J, K, L, M, N constitute the membrane sector of the complex.

It is found in the cell inner membrane. It carries out the reaction a quinone + NADH + 5 H(+)(in) = a quinol + NAD(+) + 4 H(+)(out). Its function is as follows. NDH-1 shuttles electrons from NADH, via FMN and iron-sulfur (Fe-S) centers, to quinones in the respiratory chain. The immediate electron acceptor for the enzyme in this species is believed to be ubiquinone. Couples the redox reaction to proton translocation (for every two electrons transferred, four hydrogen ions are translocated across the cytoplasmic membrane), and thus conserves the redox energy in a proton gradient. This subunit may bind ubiquinone. The sequence is that of NADH-quinone oxidoreductase subunit H from Escherichia coli O45:K1 (strain S88 / ExPEC).